The following is a 151-amino-acid chain: Transcriptional repressor NrdR (151 aa).

Residues Cys3–Cys34 fold into a zinc finger. Positions Pro49–Asp139 constitute an ATP-cone domain.

This sequence belongs to the NrdR family. It depends on Zn(2+) as a cofactor.

In terms of biological role, negatively regulates transcription of bacterial ribonucleotide reductase nrd genes and operons by binding to NrdR-boxes. The protein is Transcriptional repressor NrdR of Delftia acidovorans (strain DSM 14801 / SPH-1).